The primary structure comprises 839 residues: Taste receptor type 1 member 2 (839 aa).

Positions 1–19 (MGTRATTICSLFFLLWVLA) are cleaved as a signal peptide. Over 20–566 (EPAENSDFYL…VFLEWHEAPT (547 aa)) the chain is Extracellular. N-linked (GlcNAc...) asparagine glycans are attached at residues N84, N248, N292, N312, N368, N407, N428, N487, and N527. Residues 567 to 587 (IAVALLAALGFLSTLAILVIF) traverse the membrane as a helical segment. The Cytoplasmic portion of the chain corresponds to 588 to 602 (WRHFQTPIVRSAGGP). A helical transmembrane segment spans residues 603-623 (MCFLMLTLLLVAYMVVPVYVG). Residues 624–635 (PPKVSTCLCRQA) are Extracellular-facing. The chain crosses the membrane as a helical span at residues 636–656 (LFPLCFTICISCIAVRSFQIV). At 657 to 681 (CAFKMASRFPRAYSYWVRYQGPYVS) the chain is on the cytoplasmic side. The helical transmembrane segment at 682-702 (MAFITVLKMVIVVIGMLATGL) threads the bilayer. The Extracellular segment spans residues 703-727 (SPTTRTDPDDPKITIVSCNPNYRNS). Residues 728–748 (LLFNTSLDLLLSVVGFSFAYM) traverse the membrane as a helical segment. The Cytoplasmic portion of the chain corresponds to 749-760 (GKELPTNYNEAK). A helical transmembrane segment spans residues 761 to 781 (FITLSMTFYFTSSVSLCTFMS). Residues 782–784 (AYS) lie on the Extracellular side of the membrane. The chain crosses the membrane as a helical span at residues 785–805 (GVLVTIVDLLVTVLNLLAISL). Topologically, residues 806–839 (GYFGPKCYMILFYPERNTPAYFNSMIQGYTMRRD) are cytoplasmic.

The protein belongs to the G-protein coupled receptor 3 family. TAS1R subfamily. As to quaternary structure, forms heterodimers with TAS1R3.

The protein resides in the cell membrane. Its function is as follows. Putative taste receptor. TAS1R2/TAS1R3 recognizes diverse natural and synthetic sweeteners. In Gorilla gorilla gorilla (Western lowland gorilla), this protein is Taste receptor type 1 member 2 (TAS1R2).